A 219-amino-acid chain; its full sequence is Thiamine-phosphate synthase (219 aa).

4-amino-2-methyl-5-(diphosphooxymethyl)pyrimidine-binding positions include 44 to 48 (QFREK) and N79. Positions 80 and 99 each coordinate Mg(2+). S117 lines the 4-amino-2-methyl-5-(diphosphooxymethyl)pyrimidine pocket. A 2-[(2R,5Z)-2-carboxy-4-methylthiazol-5(2H)-ylidene]ethyl phosphate-binding site is contributed by 143–145 (TST). Residue K146 participates in 4-amino-2-methyl-5-(diphosphooxymethyl)pyrimidine binding. 2-[(2R,5Z)-2-carboxy-4-methylthiazol-5(2H)-ylidene]ethyl phosphate is bound by residues G175 and 195-196 (IS).

Belongs to the thiamine-phosphate synthase family. The cofactor is Mg(2+).

The enzyme catalyses 2-[(2R,5Z)-2-carboxy-4-methylthiazol-5(2H)-ylidene]ethyl phosphate + 4-amino-2-methyl-5-(diphosphooxymethyl)pyrimidine + 2 H(+) = thiamine phosphate + CO2 + diphosphate. The catalysed reaction is 2-(2-carboxy-4-methylthiazol-5-yl)ethyl phosphate + 4-amino-2-methyl-5-(diphosphooxymethyl)pyrimidine + 2 H(+) = thiamine phosphate + CO2 + diphosphate. It catalyses the reaction 4-methyl-5-(2-phosphooxyethyl)-thiazole + 4-amino-2-methyl-5-(diphosphooxymethyl)pyrimidine + H(+) = thiamine phosphate + diphosphate. It participates in cofactor biosynthesis; thiamine diphosphate biosynthesis; thiamine phosphate from 4-amino-2-methyl-5-diphosphomethylpyrimidine and 4-methyl-5-(2-phosphoethyl)-thiazole: step 1/1. Condenses 4-methyl-5-(beta-hydroxyethyl)thiazole monophosphate (THZ-P) and 2-methyl-4-amino-5-hydroxymethyl pyrimidine pyrophosphate (HMP-PP) to form thiamine monophosphate (TMP). This chain is Thiamine-phosphate synthase, found in Bacillus cereus (strain ATCC 14579 / DSM 31 / CCUG 7414 / JCM 2152 / NBRC 15305 / NCIMB 9373 / NCTC 2599 / NRRL B-3711).